The chain runs to 543 residues: Oxalate--CoA ligase (543 aa).

196–207 (HTSGTTSTPKTV) serves as a coordination point for ATP. The FACS signature appears at 410–458 (ENYFRTGDQGYFDPEGFLVLTGRIKELINRGGEKISPIELDGIMLSHPK). Positions 541-543 (SKL) match the C-terminal peroxisome targeting signal (PTS1) motif.

The protein belongs to the ATP-dependent AMP-binding enzyme family. As to quaternary structure, interacts with PEX5.

Its subcellular location is the peroxisome matrix. The protein resides in the peroxisome membrane. It carries out the reaction oxalate + ATP + CoA = oxalyl-CoA + AMP + diphosphate. In terms of biological role, catalyzes the first step in a degradation pathway of oxalate to CO(2) to protect the cell against the harmful effects of oxalate derived from endogenous processes or an environmental sources. The sequence is that of Oxalate--CoA ligase from Saccharomyces cerevisiae (strain ATCC 204508 / S288c) (Baker's yeast).